The sequence spans 492 residues: Peptidyl-prolyl cis-trans isomerase-like 4 (492 aa).

The 161-residue stretch at 1 to 161 (MAVLLETTLG…QDIRINHTVI (161 aa)) folds into the PPIase cyclophilin-type domain. A disordered region spans residues 167-188 (DDPPDLLIPDRSPEPTKEQLDS). Over residues 177–187 (RSPEPTKEQLD) the composition is skewed to basic and acidic residues. At Ser178 the chain carries Phosphoserine. Residue Thr182 is modified to Phosphothreonine. Glycyl lysine isopeptide (Lys-Gly) (interchain with G-Cter in SUMO2) cross-links involve residues Lys201, Lys212, and Lys218. In terms of domain architecture, RRM spans 240-318 (NVLFVCKLNP…RRIHVDFSQS (79 aa)). Glycyl lysine isopeptide (Lys-Gly) (interchain with G-Cter in SUMO2) cross-links involve residues Lys321 and Lys362. 2 disordered regions span residues 368–409 (DEQG…NPNQ) and 423–492 (EESC…SKYR). Residues 377–390 (SHSHTSKKHKKKTR) are compositionally biased toward basic residues. The residue at position 393 (Ser393) is a Phosphoserine. Residue Lys405 forms a Glycyl lysine isopeptide (Lys-Gly) (interchain with G-Cter in SUMO2) linkage. Positions 426–436 (CWEKQKNEKRD) are enriched in basic and acidic residues. Residue Lys460 forms a Glycyl lysine isopeptide (Lys-Gly) (interchain with G-Cter in SUMO2) linkage. Residue Ser471 is modified to Phosphoserine. Residues 473-485 (KRDRSRSPKKSKA) are compositionally biased toward basic residues.

Belongs to the cyclophilin-type PPIase family. PPIL4 subfamily.

It localises to the nucleus. It carries out the reaction [protein]-peptidylproline (omega=180) = [protein]-peptidylproline (omega=0). Its function is as follows. PPIases accelerate the folding of proteins. It catalyzes the cis-trans isomerization of proline imidic peptide bonds in oligopeptides. The protein is Peptidyl-prolyl cis-trans isomerase-like 4 (Ppil4) of Mus musculus (Mouse).